The following is a 241-amino-acid chain: Glutathione S-transferase omega-1 (241 aa).

Residue S2 is modified to N-acetylserine. In terms of domain architecture, GST N-terminal spans 22–101; it reads GSIRIYSMRF…YLDEAYPGKK (80 aa). Catalysis depends on C32, which acts as the Nucleophile. Residue K57 is modified to N6-acetyllysine. Glutathione-binding positions include K59, V72, and 85 to 86; that span reads ES. One can recognise a GST C-terminal domain in the interval 106–230; it reads DPYEKACQKM…DWQGFLELYL (125 aa). At S129 the chain carries Phosphoserine. 3 positions are modified to N6-acetyllysine: K143, K148, and K152.

This sequence belongs to the GST superfamily. Omega family. In terms of assembly, homodimer. Ubiquitous. Highest expression in liver, pancreas, skeletal muscle, spleen, thymus, colon, blood leukocyte and heart. Lowest expression in brain, placenta and lung.

Its subcellular location is the cytoplasm. The protein localises to the cytosol. The catalysed reaction is RX + glutathione = an S-substituted glutathione + a halide anion + H(+). The enzyme catalyses L-dehydroascorbate + 2 glutathione = glutathione disulfide + L-ascorbate. It carries out the reaction methylarsonate + 2 glutathione + H(+) = methylarsonous acid + glutathione disulfide + H2O. With respect to regulation, monomethylarsonic acid reductase activity is competitively inhibited by 1-chloro 2,4-dinitrobenzene (CDNB) and by deoxycholate. Its function is as follows. Exhibits glutathione-dependent thiol transferase and dehydroascorbate reductase activities. Has S-(phenacyl)glutathione reductase activity. Also has glutathione S-transferase activity. Participates in the biotransformation of inorganic arsenic and reduces monomethylarsonic acid (MMA) and dimethylarsonic acid. The sequence is that of Glutathione S-transferase omega-1 (GSTO1) from Homo sapiens (Human).